The sequence spans 721 residues: Glycine--tRNA ligase beta subunit (721 aa).

This sequence belongs to the class-II aminoacyl-tRNA synthetase family. In terms of assembly, tetramer of two alpha and two beta subunits.

It is found in the cytoplasm. It catalyses the reaction tRNA(Gly) + glycine + ATP = glycyl-tRNA(Gly) + AMP + diphosphate. This is Glycine--tRNA ligase beta subunit from Sinorhizobium medicae (strain WSM419) (Ensifer medicae).